The following is a 339-amino-acid chain: Flap endonuclease 1 (339 aa).

Residues 1 to 99 (MGVNLKEIVD…VAWEKRKKHK (99 aa)) are N-domain. Mg(2+) contacts are provided by aspartate 29, aspartate 81, glutamate 153, glutamate 155, aspartate 174, aspartate 176, and aspartate 237. An I-domain region spans residues 117–258 (EAIKYAKSLG…TAIEIVKRFG (142 aa)). Residues 329–337 (NQKTLFSFF) are interaction with PCNA.

Belongs to the XPG/RAD2 endonuclease family. FEN1 subfamily. Interacts with PCNA. PCNA stimulates the nuclease activity without altering cleavage specificity. Requires Mg(2+) as cofactor.

Structure-specific nuclease with 5'-flap endonuclease and 5'-3' exonuclease activities involved in DNA replication and repair. During DNA replication, cleaves the 5'-overhanging flap structure that is generated by displacement synthesis when DNA polymerase encounters the 5'-end of a downstream Okazaki fragment. Binds the unpaired 3'-DNA end and kinks the DNA to facilitate 5' cleavage specificity. Cleaves one nucleotide into the double-stranded DNA from the junction in flap DNA, leaving a nick for ligation. Also involved in the base excision repair (BER) pathway. Acts as a genome stabilization factor that prevents flaps from equilibrating into structures that lead to duplications and deletions. Also possesses 5'-3' exonuclease activity on nicked or gapped double-stranded DNA. The polypeptide is Flap endonuclease 1 (Nanoarchaeum equitans (strain Kin4-M)).